The following is a 443-amino-acid chain: tRNA-2-methylthio-N(6)-dimethylallyladenosine synthase (443 aa).

The MTTase N-terminal domain maps to 3–120 (SKLYIKTFGC…LPELIDARRR (118 aa)). Positions 12, 49, 83, 157, 161, and 164 each coordinate [4Fe-4S] cluster. A Radical SAM core domain is found at 143 to 377 (RTTGATAFVS…KIQRNAQMIS (235 aa)). Positions 378-441 (QSMVDTIQRV…SHTLRGEISD (64 aa)) constitute a TRAM domain.

It belongs to the methylthiotransferase family. MiaB subfamily. In terms of assembly, monomer. [4Fe-4S] cluster serves as cofactor.

It localises to the cytoplasm. It catalyses the reaction N(6)-dimethylallyladenosine(37) in tRNA + (sulfur carrier)-SH + AH2 + 2 S-adenosyl-L-methionine = 2-methylsulfanyl-N(6)-dimethylallyladenosine(37) in tRNA + (sulfur carrier)-H + 5'-deoxyadenosine + L-methionine + A + S-adenosyl-L-homocysteine + 2 H(+). In terms of biological role, catalyzes the methylthiolation of N6-(dimethylallyl)adenosine (i(6)A), leading to the formation of 2-methylthio-N6-(dimethylallyl)adenosine (ms(2)i(6)A) at position 37 in tRNAs that read codons beginning with uridine. The polypeptide is tRNA-2-methylthio-N(6)-dimethylallyladenosine synthase (Nitrosomonas eutropha (strain DSM 101675 / C91 / Nm57)).